Here is a 662-residue protein sequence, read N- to C-terminus: Intracellular exo-alpha-(1-&gt;5)-L-arabinofuranosidase (662 aa).

The alpha-L-arabinofuranose site is built by Glu-27, Asn-72, and Asn-174. Glu-175 acts as the Proton donor/acceptor in catalysis. Residues Tyr-246, Glu-294, and Gln-352 each coordinate alpha-L-arabinofuranose. Catalysis depends on Glu-294, which acts as the Nucleophile. Disordered regions lie at residues 454–483, 497–548, and 588–662; these read LADA…SLRD, SIRC…RTAR, and WTRW…ARRC. The segment covering 519 to 533 has biased composition (low complexity); it reads TGTPPAAPPSSSSAP. The span at 537–547 shows a compositional bias: basic and acidic residues; the sequence is PTARRSPDRTA. 3 stretches are compositionally biased toward low complexity: residues 590 to 603, 628 to 641, and 649 to 662; these read RWAP…PSRR, RRSP…TPAP, and AGAS…ARRC.

This sequence belongs to the glycosyl hydrolase 51 family. Homohexamer; trimer of dimers.

It is found in the cytoplasm. It carries out the reaction Hydrolysis of terminal non-reducing alpha-L-arabinofuranoside residues in alpha-L-arabinosides.. Its pathway is glycan metabolism; L-arabinan degradation. In terms of biological role, involved in the degradation of arabinan and is a key enzyme in the complete degradation of the plant cell wall. Catalyzes the cleavage of terminal alpha-(1-&gt;5)-arabinofuranosyl bonds in different hemicellulosic homopolysaccharides (arabino-oligoxylosides, branched and debranched arabinans). It acts rapidly on the short-chain arabino-oligoxylosides from digestion of xylan with xylanases. It hydrolyzes slowly arabinan and arabinoxylan from wheat and rye flour. The protein is Intracellular exo-alpha-(1-&gt;5)-L-arabinofuranosidase of Streptomyces lividans.